The primary structure comprises 250 residues: UPF0259 membrane protein bbp_256 (250 aa).

Transmembrane regions (helical) follow at residues 21–41 (PIIV…DSII), 86–106 (FSLL…IQMT), 125–145 (FFKL…GFLL), 146–166 (YFIP…ILLI), 188–208 (IIVP…LIIS), and 216–236 (FLAY…LIIY).

This sequence belongs to the UPF0259 family.

The protein resides in the cell membrane. This chain is UPF0259 membrane protein bbp_256, found in Buchnera aphidicola subsp. Baizongia pistaciae (strain Bp).